The chain runs to 502 residues: ATP synthase subunit alpha (502 aa).

169–176 (GDRQTGKT) provides a ligand contact to ATP.

It belongs to the ATPase alpha/beta chains family. F-type ATPases have 2 components, CF(1) - the catalytic core - and CF(0) - the membrane proton channel. CF(1) has five subunits: alpha(3), beta(3), gamma(1), delta(1), epsilon(1). CF(0) has three main subunits: a(1), b(2) and c(9-12). The alpha and beta chains form an alternating ring which encloses part of the gamma chain. CF(1) is attached to CF(0) by a central stalk formed by the gamma and epsilon chains, while a peripheral stalk is formed by the delta and b chains.

The protein localises to the cell membrane. It catalyses the reaction ATP + H2O + 4 H(+)(in) = ADP + phosphate + 5 H(+)(out). Produces ATP from ADP in the presence of a proton gradient across the membrane. The alpha chain is a regulatory subunit. The polypeptide is ATP synthase subunit alpha (Clostridium perfringens (strain SM101 / Type A)).